A 105-amino-acid chain; its full sequence is Small ribosomal subunit protein uS10c (105 aa).

Belongs to the universal ribosomal protein uS10 family. As to quaternary structure, part of the 30S ribosomal subunit.

It localises to the plastid. It is found in the chloroplast. In terms of biological role, involved in the binding of tRNA to the ribosomes. This is Small ribosomal subunit protein uS10c from Gracilaria tenuistipitata var. liui (Red alga).